We begin with the raw amino-acid sequence, 196 residues long: Probable GTP-binding protein EngB (196 aa).

Residues 24-196 (ELSEVALSGR…IWNLIEPYIS (173 aa)) form the EngB-type G domain. Residues 32–39 (GRSNVGKS), 59–63 (GKTQT), 77–80 (DVPG), 144–147 (TKED), and 176–178 (YSS) each bind GTP. Mg(2+)-binding residues include Ser-39 and Thr-61.

This sequence belongs to the TRAFAC class TrmE-Era-EngA-EngB-Septin-like GTPase superfamily. EngB GTPase family. It depends on Mg(2+) as a cofactor.

Functionally, necessary for normal cell division and for the maintenance of normal septation. This Staphylococcus aureus (strain Mu3 / ATCC 700698) protein is Probable GTP-binding protein EngB.